Here is a 431-residue protein sequence, read N- to C-terminus: Fumarylacetoacetase fahA (431 aa).

D133 contributes to the Ca(2+) binding site. Y135 serves as a coordination point for substrate. H140 serves as the catalytic Proton acceptor. Residue R149 participates in substrate binding. E209, E211, and D243 together coordinate Ca(2+). Residue D243 coordinates Mg(2+). Positions 250 and 254 each coordinate substrate. 2 residues coordinate Mg(2+): K263 and T267. T362 lines the substrate pocket. The segment covering 362 to 381 has biased composition (polar residues); the sequence is TISGKENQTQGSLLEQTNGK. A disordered region spans residues 362-382; that stretch reads TISGKENQTQGSLLEQTNGKN.

The protein belongs to the FAH family. Ca(2+) serves as cofactor. Mg(2+) is required as a cofactor.

It carries out the reaction 4-fumarylacetoacetate + H2O = acetoacetate + fumarate + H(+). The protein operates within amino-acid degradation; L-phenylalanine degradation; acetoacetate and fumarate from L-phenylalanine: step 6/6. Its function is as follows. Fumarylacetoacetase; part of the L-tyrosine degradation gene cluster that mediates the biosynthesis of the brownish pigment pyomelanin as an alternative melanin. The 4-hydroxyphenylpyruvate dioxygenase hppD catalyzes the conversion of 4-hydroxyphenylpyruvate to homogentisic acid (HGA). The protein hmgX is crucial for this conversion and thus, probably functions as an accessory factor to mediate specific activity of hppD. The homogentisate 1,2-dioxygenase hmgA is then involved in the cleavage of the aromatic ring of HGA and its conversion to 4-maleylacetoacetate. When hmgA activity is lowered by the cell wall integrity (CWI) signaling pathway, HGA accumulates and leads to the production of pyomelanin through benzoquinone acetic acid after oxidation and polymerization. On the opposite, in non-stress conditions, both hppD and hmgA activities are balanced and HGA is degraded into 4-maleylacetoacetate. 4-maleylacetoacetate is further converted to 4-fumarylacetoacetate by the maleylacetoacetate isomerase maiA, which is degraded into fumarate and acetoacetate by the fumarylacetoacetase fahA. The chain is Fumarylacetoacetase fahA from Aspergillus fumigatus (strain ATCC MYA-4609 / CBS 101355 / FGSC A1100 / Af293) (Neosartorya fumigata).